The chain runs to 273 residues: Bifunctional protein FolD (273 aa).

Residues 155 to 157, S180, and T221 each bind NADP(+); that span reads GRS.

This sequence belongs to the tetrahydrofolate dehydrogenase/cyclohydrolase family. In terms of assembly, homodimer.

The enzyme catalyses (6R)-5,10-methylene-5,6,7,8-tetrahydrofolate + NADP(+) = (6R)-5,10-methenyltetrahydrofolate + NADPH. The catalysed reaction is (6R)-5,10-methenyltetrahydrofolate + H2O = (6R)-10-formyltetrahydrofolate + H(+). It participates in one-carbon metabolism; tetrahydrofolate interconversion. Catalyzes the oxidation of 5,10-methylenetetrahydrofolate to 5,10-methenyltetrahydrofolate and then the hydrolysis of 5,10-methenyltetrahydrofolate to 10-formyltetrahydrofolate. The polypeptide is Bifunctional protein FolD (Coprothermobacter proteolyticus (strain ATCC 35245 / DSM 5265 / OCM 4 / BT)).